The primary structure comprises 347 residues: Ribosomal RNA small subunit methyltransferase C (347 aa).

This sequence belongs to the methyltransferase superfamily. RsmC family. In terms of assembly, monomer.

It is found in the cytoplasm. The catalysed reaction is guanosine(1207) in 16S rRNA + S-adenosyl-L-methionine = N(2)-methylguanosine(1207) in 16S rRNA + S-adenosyl-L-homocysteine + H(+). Specifically methylates the guanine in position 1207 of 16S rRNA in the 30S particle. The sequence is that of Ribosomal RNA small subunit methyltransferase C from Yersinia enterocolitica serotype O:8 / biotype 1B (strain NCTC 13174 / 8081).